A 364-amino-acid chain; its full sequence is Coproporphyrin III ferrochelatase (364 aa).

The Fe-coproporphyrin III site is built by R29 and Y118. Fe(2+) contacts are provided by H169 and E250.

It belongs to the ferrochelatase family.

Its subcellular location is the cytoplasm. It carries out the reaction Fe-coproporphyrin III + 2 H(+) = coproporphyrin III + Fe(2+). The protein operates within porphyrin-containing compound metabolism; protoheme biosynthesis. In terms of biological role, involved in coproporphyrin-dependent heme b biosynthesis. Catalyzes the insertion of ferrous iron into coproporphyrin III to form Fe-coproporphyrin III. In Streptococcus pneumoniae serotype 4 (strain ATCC BAA-334 / TIGR4), this protein is Coproporphyrin III ferrochelatase.